The primary structure comprises 327 residues: Selenate reductase subunit beta (327 aa).

3 consecutive 4Fe-4S ferredoxin-type domains span residues 6–35 (LAYVFDLNKCIGCHTCTMACKQLWTNRDGR), 124–155 (NHYFYLPRICNHCSNPACLAACPTKAIYKREE), and 157–186 (GLVVVDQSRCKGYRYCVKACPYGKMYFNLQ). [4Fe-4S] cluster is bound by residues C15, C18, C21, C25, C133, C136, and C141. C145, C166, and C172 together coordinate [3Fe-4S] cluster. C176, C193, C196, C208, and C212 together coordinate [4Fe-4S] cluster.

Heterotrimer of alpha (SerA), beta (SerB) and gamma (SerC) subunits. [3Fe-4S] cluster serves as cofactor. Requires [4Fe-4S] cluster as cofactor.

The protein localises to the periplasm. It catalyses the reaction selenite + 2 Fe(III)-[cytochrome c] + H2O = 2 Fe(II)-[cytochrome] + selenate + 2 H(+). Its activity is regulated as follows. Enzyme isolated from cells grown in a tungstate rich environment shows a 20-fold reduction in selenate reductase activity. Component of the selenate reductase, which catalyzes the reduction of selenate to selenite and allows anaerobic growth with selenate as the sole terminal electron acceptor. A c-type di-heme cytochrome of the cytc4 family was shown to donate electrons to the selenate reductase in vitro. SerABC can also use reduced benzyl viologen or reduced methyl viologen as an electron donor. This subunit transfers electrons from SerC to SerA. The reductase is specific for selenate, and cannot reduce nitrate, nitrite, chlorate or sulfate. The polypeptide is Selenate reductase subunit beta (Thauera selenatis).